The following is a 188-amino-acid chain: Peptidyl-tRNA hydrolase (188 aa).

Y14 contributes to the tRNA binding site. H19 acts as the Proton acceptor in catalysis. Residues Y64, N66, and N112 each coordinate tRNA.

The protein belongs to the PTH family. As to quaternary structure, monomer.

The protein localises to the cytoplasm. It carries out the reaction an N-acyl-L-alpha-aminoacyl-tRNA + H2O = an N-acyl-L-amino acid + a tRNA + H(+). In terms of biological role, hydrolyzes ribosome-free peptidyl-tRNAs (with 1 or more amino acids incorporated), which drop off the ribosome during protein synthesis, or as a result of ribosome stalling. Catalyzes the release of premature peptidyl moieties from peptidyl-tRNA molecules trapped in stalled 50S ribosomal subunits, and thus maintains levels of free tRNAs and 50S ribosomes. The sequence is that of Peptidyl-tRNA hydrolase from Leuconostoc mesenteroides subsp. mesenteroides (strain ATCC 8293 / DSM 20343 / BCRC 11652 / CCM 1803 / JCM 6124 / NCDO 523 / NBRC 100496 / NCIMB 8023 / NCTC 12954 / NRRL B-1118 / 37Y).